Reading from the N-terminus, the 840-residue chain is Leucine--tRNA ligase (840 aa).

The 'HIGH' region motif lies at 44–55; the sequence is PYPSANGLHVGH. The 'KMSKS' region signature appears at 617-621; it reads KMSKS. Lysine 620 contacts ATP.

This sequence belongs to the class-I aminoacyl-tRNA synthetase family.

It localises to the cytoplasm. It catalyses the reaction tRNA(Leu) + L-leucine + ATP = L-leucyl-tRNA(Leu) + AMP + diphosphate. This Borrelia garinii subsp. bavariensis (strain ATCC BAA-2496 / DSM 23469 / PBi) (Borreliella bavariensis) protein is Leucine--tRNA ligase.